The sequence spans 552 residues: Arginine--tRNA ligase (552 aa).

A 'HIGH' region motif is present at residues 129–139 (ANPTGPVTLAS).

It belongs to the class-I aminoacyl-tRNA synthetase family. As to quaternary structure, monomer.

It is found in the cytoplasm. It carries out the reaction tRNA(Arg) + L-arginine + ATP = L-arginyl-tRNA(Arg) + AMP + diphosphate. The protein is Arginine--tRNA ligase of Frankia alni (strain DSM 45986 / CECT 9034 / ACN14a).